We begin with the raw amino-acid sequence, 456 residues long: Myricetin 3-O-rhamnosyltransferase UGT77B2 (456 aa).

Histidine 19 acts as the Proton acceptor in catalysis. Histidine 19 provides a ligand contact to an anthocyanidin. The Charge relay role is filled by aspartate 116. Histidine 147 is a binding site for an anthocyanidin. Positions 279, 334, 351, 355, and 359 each coordinate UDP-beta-L-rhamnose. Alanine 374 is a binding site for an anthocyanidin.

It belongs to the UDP-glycosyltransferase family. Expressed in young cromes.

It carries out the reaction myricetin + UDP-beta-L-rhamnose = myricetin 3-O-alpha-L-rhamnoside + UDP + H(+). Its pathway is flavonoid metabolism. Its function is as follows. Rhamnosyltransferase involved in montbretin A (MbA) biosynthesis. Catalyzes the 3-O rhamnosylation of myricetin to produce myricetin 3-O-alpha-L-rhamnoside (MR), a precursor of MbA. MbA is a potent inhibitor of human pancreatic alpha-amylase and is being developed as drug candidate to treat type-2 diabetes. In vitro, is able to transfer UDP-glucose and UDP-xylose with 50-fold less efficiency compared with UDP-rhamnose. In vitro, can use kaempferol or quercetin as substrates, although these two flavonols may not be physiological substrates in vivo. The chain is Myricetin 3-O-rhamnosyltransferase UGT77B2 from Crocosmia x crocosmiiflora (Montbretia).